The following is a 312-amino-acid chain: MPIKIPADLPAYSVLSDEGVMVMSPDQAARQDIRPIKIGLLNLMPKKIQTENQFARLIGATPLQIEFSLIRMTEHQTKNTAAAHMEEFYRPFQEVRDEKFDGLIITGAPIEHLPFEDVTYWQELCEVFEWTQTNVHSTFGVCWGGMAMINYFHGVRKHMLDHKAFGCFRHQNLQPTSPYLRGFSDDFVIPVSRWTEMSQSEIDAAPGLTTLLGSADVGPCLVEDKAHRALYIFNHFEYDSDTLKQEYDRDVASGTEINVPINYYPDDDPSQRPLNRWRSHAHLLYGNWVSEIYQTTPYDVERIGLDTTDLRA.

Residue C142 is the Acyl-thioester intermediate of the active site. Residues K163 and S192 each coordinate substrate. Residue H235 is the Proton acceptor of the active site. E237 is a catalytic residue. Residue R249 participates in substrate binding.

The protein belongs to the MetA family.

The protein resides in the cytoplasm. It catalyses the reaction L-homoserine + acetyl-CoA = O-acetyl-L-homoserine + CoA. The protein operates within amino-acid biosynthesis; L-methionine biosynthesis via de novo pathway; O-acetyl-L-homoserine from L-homoserine: step 1/1. Functionally, transfers an acetyl group from acetyl-CoA to L-homoserine, forming acetyl-L-homoserine. The polypeptide is Homoserine O-acetyltransferase (Ruegeria sp. (strain TM1040) (Silicibacter sp.)).